The sequence spans 224 residues: 7-cyano-7-deazaguanine synthase (224 aa).

ATP is bound at residue 10-20 (LSGGLDSATVV). Zn(2+)-binding residues include Cys189, Cys199, Cys202, and Cys205.

The protein belongs to the QueC family. It depends on Zn(2+) as a cofactor.

The enzyme catalyses 7-carboxy-7-deazaguanine + NH4(+) + ATP = 7-cyano-7-deazaguanine + ADP + phosphate + H2O + H(+). It participates in purine metabolism; 7-cyano-7-deazaguanine biosynthesis. Functionally, catalyzes the ATP-dependent conversion of 7-carboxy-7-deazaguanine (CDG) to 7-cyano-7-deazaguanine (preQ(0)). The sequence is that of 7-cyano-7-deazaguanine synthase from Pseudomonas paraeruginosa (strain DSM 24068 / PA7) (Pseudomonas aeruginosa (strain PA7)).